A 735-amino-acid polypeptide reads, in one-letter code: MMDGAQTNSGGCPVMHGGGSRPMGATANQHWWPNQLNLKPLSANSEKLDPMGEGFDYAEEFQKLDMAAVKADIANCLKDSQDWWPADYGHYGPLMIRLAWHSAGTYRTYDGRGGAGTGTQRFAPLNSWPDNGNLDKARRILWPIKEKYGKSLSWADLLILVGNVALEDMGFETFGFAGGRADVWEPEEDIYWGPETEWLATSDMENTRYGEGRDLHNPLAAVQMGLIYVNPQGPDGNPDPLASAFDIRDTFARMAMNDEETVALVAGGHTFGKAHGAGDPDLVGAEPEGADVAEMGLGWKNGFESGKGVHSTTSGVEGPWTPTPTQWDMSYFDVLFGHEWELTKSPAGAHQWRPVDHENDQAPQVDGNGTVPIMMTTADMAMRMDPAYEKISRDFHANPDKFADAFARAWYKLTHRDMGPIQRYLGNDVPSEELLWQDPVPMPQGPQVNDDEQAELKAAVAATGLTAAELVRVAWGSAASYRDSDKRGGANGARIRLQPARGWTVNNPEELDKVLPVLDSIADAFNGRGGTQITMADMIVLAGGVGVEMAAREAGHNIHVPFTPGRGDATQEQTDVDSYDVLEPTSDGFRNYHATFSLREPAEMLVDKAALLGLTAPEMTVLVGGLRAIGATHGGARHGVLTETPGALNNAFFKNVLSMDTVWNQTDSAILEGKDRASGQVKWTATIVDLVFGSNSQLRAVAEVYASADAEAKMVDDFVAAWVKVMENDRFDLHR.

Residues 1–10 (MMDGAQTNSG) are compositionally biased toward polar residues. A disordered region spans residues 1 to 20 (MMDGAQTNSGGCPVMHGGGS). The segment at residues 100 to 228 (WHSAGTYRTY…LAAVQMGLIY (129 aa)) is a cross-link (tryptophyl-tyrosyl-methioninium (Trp-Tyr) (with M-254)). The active-site Proton acceptor is the His101. A cross-link (tryptophyl-tyrosyl-methioninium (Tyr-Met) (with W-100)) is located at residues 228-254 (YVNPQGPDGNPDPLASAFDIRDTFARM). His269 contributes to the heme b binding site.

This sequence belongs to the peroxidase family. Peroxidase/catalase subfamily. As to quaternary structure, homodimer or homotetramer. It depends on heme b as a cofactor. Formation of the three residue Trp-Tyr-Met cross-link is important for the catalase, but not the peroxidase activity of the enzyme.

It carries out the reaction H2O2 + AH2 = A + 2 H2O. The enzyme catalyses 2 H2O2 = O2 + 2 H2O. Bifunctional enzyme with both catalase and broad-spectrum peroxidase activity. This Jannaschia sp. (strain CCS1) protein is Catalase-peroxidase.